A 315-amino-acid polypeptide reads, in one-letter code: Methionyl-tRNA formyltransferase (315 aa).

The segment at 2–189 (SESLRIIFAG…LITTLKQLAD (188 aa)) is N-terminal domain. A (6S)-5,6,7,8-tetrahydrofolate-binding site is contributed by 113-116 (SLLP). Residues 210–315 (KEEARIDWSL…EWFVPGNRLV (106 aa)) are C-terminal domain.

The protein belongs to the Fmt family. As to quaternary structure, monomer.

The catalysed reaction is L-methionyl-tRNA(fMet) + (6R)-10-formyltetrahydrofolate = N-formyl-L-methionyl-tRNA(fMet) + (6S)-5,6,7,8-tetrahydrofolate + H(+). Activity is optimum in the presence of Mg(2+) and K(+). Attaches a formyl group to the free amino group of methionyl-tRNA(fMet). The formyl group appears to play a dual role in the initiator identity of N-formylmethionyl-tRNA by promoting its recognition by IF2 and preventing the misappropriation of this tRNA by the elongation apparatus. This is Methionyl-tRNA formyltransferase from Escherichia coli (strain K12).